Consider the following 473-residue polypeptide: Monocarboxylate transporter 4 (473 aa).

Topologically, residues 1 to 17 are cytoplasmic; sequence MGAVVVDDGPSGVKAPD. Residues 18 to 38 traverse the membrane as a helical segment; the sequence is GGWGWAVLFGCFIITGFSYAF. Residues 39-61 lie on the Extracellular side of the membrane; it reads PKAVSVFFKELIREFGVGYSDTA. A helical membrane pass occupies residues 62 to 82; that stretch reads WISSILLAMLYGTGPLCSVCV. At 83-91 the chain is on the cytoplasmic side; it reads NRFGCRPVM. A helical transmembrane segment spans residues 92–112; that stretch reads LVGGLFASMGMVIASFCTSIV. The Extracellular segment spans residues 113–115; the sequence is QIY. The helical transmembrane segment at 116–136 threads the bilayer; it reads LTAGVITGLGLALNFQPSLIM. The Cytoplasmic portion of the chain corresponds to 137–149; the sequence is LNRYFDKRRPLAN. A helical membrane pass occupies residues 150–170; sequence GLSAAGSPVFLCALSPLGQIL. The Extracellular portion of the chain corresponds to 171–179; it reads QHEYGWRGG. A helical membrane pass occupies residues 180–200; sequence FLILGGMLLNCCVCGALMRPL. The Cytoplasmic portion of the chain corresponds to 201–231; that stretch reads EPPKKSEATKEPAEKKAKKKLLDFSVFKDGG. Residues 232–252 traverse the membrane as a helical segment; the sequence is FVIYTLAASIMVLGLFVPPVF. At 253-268 the chain is on the extracellular side; it reads VVSYAKDLGYQDTKAA. The helical transmembrane segment at 269-289 threads the bilayer; that stretch reads FLLTILGFIDIFARPICGMVA. The Cytoplasmic segment spans residues 290–297; that stretch reads GLKWVRPR. A helical membrane pass occupies residues 298 to 318; that stretch reads CVYLFSFAMIFNGFTDLMGSM. Residues 319–321 lie on the Extracellular side of the membrane; it reads SVD. A helical membrane pass occupies residues 322-342; it reads YGGLVVFCIFFGISYGMVGAL. The Cytoplasmic segment spans residues 343-358; the sequence is QFEVLMAIVGTQKFSS. Residues 359-379 traverse the membrane as a helical segment; the sequence is AIGLVLLAEAMAVLIGPPSAG. Residues 380–388 are Extracellular-facing; it reads KLLDLTRRY. The helical transmembrane segment at 389-409 threads the bilayer; that stretch reads MFVFIIAGIEVTTSALVLALG. The Cytoplasmic segment spans residues 410-473; the sequence is NFFCIKKKPA…EVVTNPETCV (64 aa). Residues 421–447 form a disordered region; sequence PHTKEAAAEREELNKSEDKTPEDAKVD. Basolateral sorting signal stretches follow at residues 427–449 and 449–473; these read AAEREELNKSEDKTPEDAKVDSI and IEVEQFLKDEPEKNGEVVTNPETCV.

Belongs to the major facilitator superfamily. Monocarboxylate porter (TC 2.A.1.13) family. In terms of assembly, interacts with BSG; interaction mediates SLC16A3 targeting to the plasma membrane.

The protein localises to the cell membrane. Its subcellular location is the basolateral cell membrane. The catalysed reaction is (S)-lactate(in) + H(+)(in) = (S)-lactate(out) + H(+)(out). It carries out the reaction pyruvate(out) + H(+)(out) = pyruvate(in) + H(+)(in). In terms of biological role, proton-dependent transporter of monocarboxylates such as L-lactate and pyruvate. Plays a predominant role in the L-lactate efflux from highly glycolytic cells. This is Monocarboxylate transporter 4 (SLC16A3) from Gallus gallus (Chicken).